Here is a 94-residue protein sequence, read N- to C-terminus: Co-chaperonin GroES (94 aa).

The protein belongs to the GroES chaperonin family. In terms of assembly, heptamer of 7 subunits arranged in a ring. Interacts with the chaperonin GroEL.

It is found in the cytoplasm. Functionally, together with the chaperonin GroEL, plays an essential role in assisting protein folding. The GroEL-GroES system forms a nano-cage that allows encapsulation of the non-native substrate proteins and provides a physical environment optimized to promote and accelerate protein folding. GroES binds to the apical surface of the GroEL ring, thereby capping the opening of the GroEL channel. The sequence is that of Co-chaperonin GroES from Lactobacillus delbrueckii subsp. bulgaricus (strain ATCC BAA-365 / Lb-18).